Here is a 141-residue protein sequence, read N- to C-terminus: Antifungal protein ginkbilobin-like protein 1 (141 aa).

Residues 1–32 (MSISSKFQLRSSTSLLLLVALMVVMGMDGAAA) form the signal peptide. The Gnk2-homologous domain occupies 36 to 141 (TNFVSSACNT…CFIQYEQHSF (106 aa)). Cystine bridges form between C43–C119, C95–C104, and C107–C132. Alpha-D-mannopyranose is bound at residue N44. Alpha-D-mannopyranose contacts are provided by R126 and E137.

Functionally, exerts antifungal activity through its carbohydrate-binding specificity. The polypeptide is Antifungal protein ginkbilobin-like protein 1 (Picea glauca (White spruce)).